The primary structure comprises 136 residues: Lipoprotein YghG (136 aa).

An N-terminal signal peptide occupies residues 1–24 (MSIKQMPGRVLISLLLSVTGLLSG). Residue Cys-25 is the site of N-palmitoyl cysteine attachment. Cys-25 carries S-diacylglycerol cysteine lipidation.

It belongs to the GspS/AspS pilotin family.

It is found in the cell outer membrane. Involved in a type II secretion system (T2SS, formerly general secretion pathway, GSP) for the export of folded proteins across the outer membrane. In a functional T2SS this subunit helps assemble the outer membrane channel. The sequence is that of Lipoprotein YghG (yghG) from Escherichia coli (strain K12).